A 377-amino-acid polypeptide reads, in one-letter code: tRNA-specific 2-thiouridylase MnmA (377 aa).

Residues 17 to 24 and Met-43 each bind ATP; that span reads GMSGGVDS. Residues 103–105 form an interaction with target base in tRNA region; that stretch reads NPD. Residue Cys-108 is the Nucleophile of the active site. Cys-108 and Cys-204 are joined by a disulfide. Gly-132 contacts ATP. The interval 154 to 156 is interaction with tRNA; sequence KDQ. Cys-204 functions as the Cysteine persulfide intermediate in the catalytic mechanism. Residues 316-317 form an interaction with tRNA region; that stretch reads RY.

Belongs to the MnmA/TRMU family.

Its subcellular location is the cytoplasm. The enzyme catalyses S-sulfanyl-L-cysteinyl-[protein] + uridine(34) in tRNA + AH2 + ATP = 2-thiouridine(34) in tRNA + L-cysteinyl-[protein] + A + AMP + diphosphate + H(+). In terms of biological role, catalyzes the 2-thiolation of uridine at the wobble position (U34) of tRNA, leading to the formation of s(2)U34. This chain is tRNA-specific 2-thiouridylase MnmA, found in Pseudomonas fluorescens (strain ATCC BAA-477 / NRRL B-23932 / Pf-5).